We begin with the raw amino-acid sequence, 77 residues long: EMBRYO SURROUNDING FACTOR 1-like protein 6 (77 aa).

The signal sequence occupies residues 1–25 (MSPSHFAILFIIVISLVPLHGYANG). Intrachain disulfides connect Cys38–Cys53, Cys43–Cys72, Cys51–Cys68, and Cys54–Cys61.

The protein belongs to the MEG family.

The protein is EMBRYO SURROUNDING FACTOR 1-like protein 6 (ESFL6) of Arabidopsis thaliana (Mouse-ear cress).